Consider the following 591-residue polypeptide: Asparagine synthetase [glutamine-hydrolyzing] 2 (591 aa).

C2 (for GATase activity) is an active-site residue. Residues 2–185 (CGILAVLGVA…PGHLYSSKTG (184 aa)) enclose the Glutamine amidotransferase type-2 domain. Residues 50–54 (RLAIV), 75–77 (NGE), and D98 contribute to the L-glutamine site. The region spanning 193 to 516 (PPWFSESIPS…PKNAARLTVP (324 aa)) is the Asparagine synthetase domain. ATP is bound by residues L231, I267, and 341–342 (SG).

As to expression, expressed in companion cells of leaf sheath vascular bundles, and phloem-parenchyma cells, nucellar projections and nucellar epidermis of dorsal vascular bundles of grains.

It carries out the reaction L-aspartate + L-glutamine + ATP + H2O = L-asparagine + L-glutamate + AMP + diphosphate + H(+). The protein operates within amino-acid biosynthesis; L-asparagine biosynthesis; L-asparagine from L-aspartate (L-Gln route): step 1/1. Essential for nitrogen assimilation, distribution and remobilization within the plant via the phloem. In Oryza sativa subsp. japonica (Rice), this protein is Asparagine synthetase [glutamine-hydrolyzing] 2.